Consider the following 129-residue polypeptide: Small ribosomal subunit protein uS11 (129 aa).

The protein belongs to the universal ribosomal protein uS11 family. In terms of assembly, part of the 30S ribosomal subunit. Interacts with proteins S7 and S18. Binds to IF-3.

Its function is as follows. Located on the platform of the 30S subunit, it bridges several disparate RNA helices of the 16S rRNA. Forms part of the Shine-Dalgarno cleft in the 70S ribosome. This is Small ribosomal subunit protein uS11 from Phenylobacterium zucineum (strain HLK1).